Here is a 451-residue protein sequence, read N- to C-terminus: Tryptophan--tRNA ligase (451 aa).

Residues Thr-10–Thr-12 and Gly-18–Asn-19 each bind ATP. The 'HIGH' region signature appears at Thr-11–Asn-19. Asp-143 contributes to the L-tryptophan binding site. Residues Gly-155 to Asp-157, Leu-195, and Lys-202 to Ser-206 contribute to the ATP site. Residues Lys-202–Ser-206 carry the 'KMSKS' region motif.

The protein belongs to the class-I aminoacyl-tRNA synthetase family. Homodimer.

It is found in the cytoplasm. The catalysed reaction is tRNA(Trp) + L-tryptophan + ATP = L-tryptophyl-tRNA(Trp) + AMP + diphosphate + H(+). Catalyzes the attachment of tryptophan to tRNA(Trp). This Bordetella pertussis (strain Tohama I / ATCC BAA-589 / NCTC 13251) protein is Tryptophan--tRNA ligase.